The primary structure comprises 659 residues: ATP-binding cassette sub-family D member 3 (659 aa).

The interval 2-61 (AAFSKYLTARNSSLAGAAFLLFCLLHKRRRALGLHGKKSGKPPLQNNEKEGKKERAVVDK) is interaction with PEX19. Residue Asn-12 is glycosylated (N-linked (GlcNAc...) asparagine). Lys-61 carries the post-translational modification N6-acetyllysine. A helical transmembrane segment spans residues 84–104 (GYLILIAVMLVSRTYCDVWMI). The ABC transmembrane type-1 domain maps to 85 to 372 (YLILIAVMLV…MLLRMSQALG (288 aa)). N-linked (GlcNAc...) asparagine glycosylation is present at Asn-106. Residues 126-146 (LFNFIAAMPLISLVNNFLKYG) form a helical membrane-spanning segment. An N-linked (GlcNAc...) asparagine glycan is attached at Asn-206. The chain crosses the membrane as a helical span at residues 224-244 (AIGAQGPASMMAYLLVSGLFL). Lys-260 bears the N6-acetyllysine mark. Residues 313–333 (MGFIDSIIAKYIATVVGYLVV) form a helical membrane-spanning segment. Position 399 is an N6-acetyllysine (Lys-399). A Phosphoserine modification is found at Ser-424. One can recognise an ABC transporter domain in the interval 434–659 (INADNIIKFD…ITEDTVEFGS (226 aa)). 473–480 (GPNGCGKS) is a binding site for ATP. Lys-533 carries the N6-acetyllysine modification. Position 659 is a phosphoserine (Ser-659).

It belongs to the ABC transporter superfamily. ABCD family. Peroxisomal fatty acyl CoA transporter (TC 3.A.1.203) subfamily. Homodimers. Can form heterodimers with ABCD1 and ABCD2. Dimerization is necessary to form an active transporter. Interacts with PEX19; mediates the targeting of ABCD3 to peroxisomes. Post-translationally, ubiquitinated by PEX2 during pexophagy in response to starvation, leading to its degradation.

It is found in the peroxisome membrane. The catalysed reaction is a very long-chain fatty acyl-CoA + H2O = a very long-chain fatty acid + CoA + H(+). It carries out the reaction a very long-chain fatty acid(in) + ATP + H2O = a very long-chain fatty acid(out) + ADP + phosphate + H(+). It catalyses the reaction a long-chain fatty acyl-CoA + H2O = a long-chain fatty acid + CoA + H(+). The enzyme catalyses a long-chain fatty acid(in) + ATP + H2O = a long-chain fatty acid(out) + ADP + phosphate + H(+). The catalysed reaction is pristanoyl-CoA + H2O = 2,6,10,14-tetramethylpentadecanoate + CoA + H(+). It carries out the reaction 2,6,10,14-tetramethylpentadecanoate(in) + ATP + H2O = 2,6,10,14-tetramethylpentadecanoate(out) + ADP + phosphate + H(+). It catalyses the reaction hexadecanedioyl-CoA + H2O = hexadecanedioate + CoA + H(+). The enzyme catalyses hexadecanedioate(in) + ATP + H2O = hexadecanedioate(out) + ADP + phosphate + H(+). The catalysed reaction is (5Z,8Z,11Z,14Z,17Z)-eicosapentaenoyl-CoA + H2O = (5Z,8Z,11Z,14Z,17Z)-eicosapentaenoate + CoA + H(+). It carries out the reaction (5Z,8Z,11Z,14Z,17Z)-eicosapentaenoate(in) + ATP + H2O = (5Z,8Z,11Z,14Z,17Z)-eicosapentaenoate(out) + ADP + phosphate + H(+). It catalyses the reaction (4Z,7Z,10Z,13Z,16Z,19Z)-docosahexaenoyl-CoA + H2O = (4Z,7Z,10Z,13Z,16Z,19Z)-docosahexaenoate + CoA + H(+). The enzyme catalyses (4Z,7Z,10Z,13Z,16Z,19Z)-docosahexaenoate(in) + ATP + H2O = (4Z,7Z,10Z,13Z,16Z,19Z)-docosahexaenoate(out) + ADP + phosphate + H(+). In terms of biological role, broad substrate specificity ATP-dependent transporter of the ATP-binding cassette (ABC) family that catalyzes the transport of long-chain fatty acids (LCFA)-CoA, dicarboxylic acids-CoA, long-branched-chain fatty acids-CoA and bile acids from the cytosol to the peroxisome lumen for beta-oxydation. Has fatty acyl-CoA thioesterase and ATPase activities. Probably hydrolyzes fatty acyl-CoAs into free fatty acids prior to their ATP-dependent transport into peroxisomes. Thus, play a role in regulation of LCFAs and energy metabolism namely, in the degradation and biosynthesis of fatty acids by beta-oxidation. The chain is ATP-binding cassette sub-family D member 3 (Abcd3) from Rattus norvegicus (Rat).